A 318-amino-acid chain; its full sequence is Probable RNA methyltransferase At5g51130 (318 aa).

Disordered regions lie at residues 1–61 and 146–184; these read MGRD…NQEV and NSTK…DSAE. Residues 16-34 are compositionally biased toward basic and acidic residues; it reads RSNENEKSVEKVVANEEKV. Low complexity predominate over residues 37–52; the sequence is QQKQKQQQGQQGNCNQ. The region spanning 82-318 is the Bin3-type SAM domain; sequence DPRLKVLKKE…FDRQILAFQK (237 aa).

The protein belongs to the methyltransferase superfamily.

Functionally, probable RNA methyltransferase. The chain is Probable RNA methyltransferase At5g51130 from Arabidopsis thaliana (Mouse-ear cress).